The primary structure comprises 98 residues: Co-chaperonin GroES 4 (98 aa).

The protein belongs to the GroES chaperonin family. In terms of assembly, heptamer of 7 subunits arranged in a ring. Interacts with the chaperonin GroEL.

The protein resides in the cytoplasm. Functionally, together with the chaperonin GroEL, plays an essential role in assisting protein folding. The GroEL-GroES system forms a nano-cage that allows encapsulation of the non-native substrate proteins and provides a physical environment optimized to promote and accelerate protein folding. GroES binds to the apical surface of the GroEL ring, thereby capping the opening of the GroEL channel. This Mesorhizobium japonicum (strain LMG 29417 / CECT 9101 / MAFF 303099) (Mesorhizobium loti (strain MAFF 303099)) protein is Co-chaperonin GroES 4.